The sequence spans 282 residues: NADH-ubiquinone oxidoreductase chain 2 (282 aa).

Helical transmembrane passes span 17-37, 58-78, 87-107, 115-135, 166-186, 202-222, and 232-252; these read ILTNNVIVWWSIFLLMTVVFI, SLGLLFLLCSGGLLQFFIILL, FWIFNVTNNIFNYGLMWFLTF, ILLQIFWLSSVYILLFGLLIC, FSMFNTFYLFIYYFVLMVLLI, TTLVFLNIPFSVSFFVKIFSL, and FTLFLLFTMFLSVLAFSFWLI.

This sequence belongs to the complex I subunit 2 family.

The protein resides in the mitochondrion inner membrane. The enzyme catalyses a ubiquinone + NADH + 5 H(+)(in) = a ubiquinol + NAD(+) + 4 H(+)(out). In terms of biological role, core subunit of the mitochondrial membrane respiratory chain NADH dehydrogenase (Complex I) that is believed to belong to the minimal assembly required for catalysis. Complex I functions in the transfer of electrons from NADH to the respiratory chain. The immediate electron acceptor for the enzyme is believed to be ubiquinone. The polypeptide is NADH-ubiquinone oxidoreductase chain 2 (Caenorhabditis elegans).